The chain runs to 163 residues: Transcriptional repressor NrdR (163 aa).

The segment at 3–34 (CPFCRHDDSRVVDSRTTDDGSSIRRRRQCPNC) is a zinc-finger region. Positions 46–136 (LSVIKRSGAP…VYQAFDSLAD (91 aa)) constitute an ATP-cone domain.

This sequence belongs to the NrdR family. Zn(2+) is required as a cofactor.

Negatively regulates transcription of bacterial ribonucleotide reductase nrd genes and operons by binding to NrdR-boxes. The protein is Transcriptional repressor NrdR of Kineococcus radiotolerans (strain ATCC BAA-149 / DSM 14245 / SRS30216).